Consider the following 168-residue polypeptide: Transmembrane protein 31 (168 aa).

The segment covering 1–11 (MRLTEKSEGEQ) has biased composition (basic and acidic residues). Residues 1–63 (MRLTEKSEGE…LPSRRTPTTS (63 aa)) are disordered. Composition is skewed to polar residues over residues 13–22 (LKPNNSNAPN) and 35–48 (HTPARQRTQRADTQ). Residues 49–63 (PSRCRLPSRRTPTTS) show a composition bias toward low complexity. 2 helical membrane passes run 119 to 139 (IGLPIILHLFALSTLYFYKFF) and 148 to 168 (FFILLVLLLLLFIIVFILIFF).

It localises to the membrane. This chain is Transmembrane protein 31 (TMEM31), found in Homo sapiens (Human).